Here is a 239-residue protein sequence, read N- to C-terminus: Probable transcriptional regulatory protein Veis_4238 (239 aa).

Residues 1–22 (MAGHSKWANIQHRKGRQDEKRG) form a disordered region.

The protein belongs to the TACO1 family.

The protein resides in the cytoplasm. The polypeptide is Probable transcriptional regulatory protein Veis_4238 (Verminephrobacter eiseniae (strain EF01-2)).